The primary structure comprises 288 residues: Intermediate transcription factor 3 small subunit (288 aa).

Belongs to the orthopoxvirus OPG134 family. As to quaternary structure, heterodimer of a 45 kDa (A23R) and a 32 kDa (A8R) subunit to form the virus intermediate transcription factor (VITF)-3.

In terms of biological role, acts with RNA polymerase to initiate transcription from intermediate gene promoters. The chain is Intermediate transcription factor 3 small subunit (OPG134) from Homo sapiens (Human).